Consider the following 362-residue polypeptide: 3-dehydroquinate synthase (362 aa).

Residues 71 to 76 (DGEQYK), 105 to 109 (GVVGD), 129 to 130 (TT), Lys142, Lys151, and 169 to 172 (CLKT) contribute to the NAD(+) site. Zn(2+)-binding residues include Glu184, His247, and His264.

Belongs to the sugar phosphate cyclases superfamily. Dehydroquinate synthase family. It depends on Co(2+) as a cofactor. Requires Zn(2+) as cofactor. NAD(+) serves as cofactor.

The protein resides in the cytoplasm. The enzyme catalyses 7-phospho-2-dehydro-3-deoxy-D-arabino-heptonate = 3-dehydroquinate + phosphate. Its pathway is metabolic intermediate biosynthesis; chorismate biosynthesis; chorismate from D-erythrose 4-phosphate and phosphoenolpyruvate: step 2/7. Catalyzes the conversion of 3-deoxy-D-arabino-heptulosonate 7-phosphate (DAHP) to dehydroquinate (DHQ). This is 3-dehydroquinate synthase from Shigella dysenteriae serotype 1 (strain Sd197).